The chain runs to 72 residues: U-poneritoxin(01)-Om7a (72 aa).

The signal sequence occupies residues 1-27 (MKPSGLTFAFLVVFMMAIMYNSVQVTA). Positions 28–45 (DADADAEAEALANALAEA) are excised as a propeptide.

It belongs to the formicidae venom precursor-01 superfamily. As to expression, expressed by the venom gland.

It is found in the secreted. Functionally, peptide with unknown function that does not resemble any other pilosulin-like peptide and appears to have a coiled coil structure. This chain is U-poneritoxin(01)-Om7a, found in Odontomachus monticola (Trap-jaw ant).